The sequence spans 448 residues: Probable glycine dehydrogenase (decarboxylating) subunit 1 (448 aa).

Belongs to the GcvP family. N-terminal subunit subfamily. As to quaternary structure, the glycine cleavage system is composed of four proteins: P, T, L and H. In this organism, the P 'protein' is a heterodimer of two subunits.

It catalyses the reaction N(6)-[(R)-lipoyl]-L-lysyl-[glycine-cleavage complex H protein] + glycine + H(+) = N(6)-[(R)-S(8)-aminomethyldihydrolipoyl]-L-lysyl-[glycine-cleavage complex H protein] + CO2. Functionally, the glycine cleavage system catalyzes the degradation of glycine. The P protein binds the alpha-amino group of glycine through its pyridoxal phosphate cofactor; CO(2) is released and the remaining methylamine moiety is then transferred to the lipoamide cofactor of the H protein. The protein is Probable glycine dehydrogenase (decarboxylating) subunit 1 of Shouchella clausii (strain KSM-K16) (Alkalihalobacillus clausii).